We begin with the raw amino-acid sequence, 959 residues long: Glycine dehydrogenase (decarboxylating) (959 aa).

Position 704 is an N6-(pyridoxal phosphate)lysine (K704).

Belongs to the GcvP family. In terms of assembly, the glycine cleavage system is composed of four proteins: P, T, L and H. The cofactor is pyridoxal 5'-phosphate.

The catalysed reaction is N(6)-[(R)-lipoyl]-L-lysyl-[glycine-cleavage complex H protein] + glycine + H(+) = N(6)-[(R)-S(8)-aminomethyldihydrolipoyl]-L-lysyl-[glycine-cleavage complex H protein] + CO2. In terms of biological role, the glycine cleavage system catalyzes the degradation of glycine. The P protein binds the alpha-amino group of glycine through its pyridoxal phosphate cofactor; CO(2) is released and the remaining methylamine moiety is then transferred to the lipoamide cofactor of the H protein. The protein is Glycine dehydrogenase (decarboxylating) of Parasynechococcus marenigrum (strain WH8102).